The primary structure comprises 222 residues: Uridine kinase (222 aa).

13–20 is an ATP binding site; that stretch reads GGSGAGKT.

Belongs to the uridine kinase family.

Its subcellular location is the cytoplasm. It catalyses the reaction uridine + ATP = UMP + ADP + H(+). The enzyme catalyses cytidine + ATP = CMP + ADP + H(+). It participates in pyrimidine metabolism; CTP biosynthesis via salvage pathway; CTP from cytidine: step 1/3. It functions in the pathway pyrimidine metabolism; UMP biosynthesis via salvage pathway; UMP from uridine: step 1/1. The chain is Uridine kinase from Chlamydia pneumoniae (Chlamydophila pneumoniae).